Consider the following 347-residue polypeptide: UDP-N-acetylenolpyruvoylglucosamine reductase (347 aa).

The FAD-binding PCMH-type domain maps to Ala16 to Thr187. The active site involves Arg163. Catalysis depends on Ser233, which acts as the Proton donor. Glu328 is an active-site residue.

This sequence belongs to the MurB family. FAD serves as cofactor.

Its subcellular location is the cytoplasm. The enzyme catalyses UDP-N-acetyl-alpha-D-muramate + NADP(+) = UDP-N-acetyl-3-O-(1-carboxyvinyl)-alpha-D-glucosamine + NADPH + H(+). The protein operates within cell wall biogenesis; peptidoglycan biosynthesis. Functionally, cell wall formation. The sequence is that of UDP-N-acetylenolpyruvoylglucosamine reductase from Vibrio vulnificus (strain YJ016).